The following is a 513-amino-acid chain: Glutamate--tRNA ligase 2 (513 aa).

A 'HIGH' region motif is present at residues 11–21; the sequence is PSPTGFLHIGS. The 'KMSKS' region signature appears at 240–244; it reads KLSKR. ATP is bound at residue Lys243.

Belongs to the class-I aminoacyl-tRNA synthetase family. Glutamate--tRNA ligase type 1 subfamily. Monomer.

The protein resides in the cytoplasm. The catalysed reaction is tRNA(Glu) + L-glutamate + ATP = L-glutamyl-tRNA(Glu) + AMP + diphosphate. In terms of biological role, catalyzes the attachment of glutamate to tRNA(Glu) in a two-step reaction: glutamate is first activated by ATP to form Glu-AMP and then transferred to the acceptor end of tRNA(Glu). The sequence is that of Glutamate--tRNA ligase 2 from Rickettsia rickettsii (strain Iowa).